Here is a 221-residue protein sequence, read N- to C-terminus: F-box protein At1g55000 (221 aa).

The F-box domain maps to 7–46 (DTLIIIFQKLTVADLARASCVCKVWNSVATEDDLVVSAFT). A LysM domain is found at 74-118 (ISHRICRGDSVTSLAVKYAVQVMDIKRLNNMMSDHGIYSRDRLLI).

Part of a SCF (ASK-cullin-F-box) protein ligase complex. Interacts with SKP1A/ASK1, SKP1B/ASK2, ASK4, ASK11 and ASK13.

Its pathway is protein modification; protein ubiquitination. In terms of biological role, component of SCF(ASK-cullin-F-box) E3 ubiquitin ligase complexes, which may mediate the ubiquitination and subsequent proteasomal degradation of target proteins. This Arabidopsis thaliana (Mouse-ear cress) protein is F-box protein At1g55000.